The sequence spans 453 residues: Major fimbrium subunit FimC (453 aa).

An N-terminal signal peptide occupies residues 1 to 28; that stretch reads MKMKYFHHPSGLLPRLLLLLLLTMGAVA. A lipid anchor (N-palmitoyl cysteine) is attached at C29. Residue C29 is the site of S-diacylglycerol cysteine attachment. A propeptide spanning residues 29–56 is cleaved from the precursor; it reads CTKEDNPDQPTSDEVATVKMSLDDVEMR.

Belongs to the bacteroidetes fimbrillin superfamily. FimA/Mfa1 family. Fimbriae are composed of a major, structural subunit and the minor components FimC, FimD and FimE. Identified in a complex composed of FimC, FimD and FimE (in vitro). The complex interacts with host extracellular matrix proteins, including fibronectin and type I collagen. Interacts with host CXCR4.

The protein resides in the fimbrium. Its subcellular location is the cell outer membrane. Minor component of fimbriae. These long, filamentous pili are attached to the cell surface; they mediate biofilm formation, adhesion onto host cells and onto other bacteria that are part of the oral microbiome. They play an important role in invasion of periodontal tissues and are major virulence factors. FimC, FimD and FimE contribute to interaction with host CXCR4 and thereby down-regulate the TLR2-mediated host immune response. This Porphyromonas gingivalis (strain ATCC 33277 / DSM 20709 / CIP 103683 / JCM 12257 / NCTC 11834 / 2561) protein is Major fimbrium subunit FimC.